The chain runs to 261 residues: Cytochrome c oxidase subunit 3 (261 aa).

Residues 1 to 15 (MTHQTHAYHMVNPSP) lie on the Mitochondrial matrix side of the membrane. The chain crosses the membrane as a helical span at residues 16-34 (WPLTGALSALLMTSGLVMW). Over 35 to 40 (FHYHST) the chain is Mitochondrial intermembrane. A helical membrane pass occupies residues 41-66 (ILVLLGLLTNILTMYQWWRDVVREGT). Over 67–72 (FQGHHT) the chain is Mitochondrial matrix. The chain crosses the membrane as a helical span at residues 73-105 (PTVQKGLRYGMVLFIISEVFFFAGFFWAFYHSS). Over 106 to 128 (LAPTPELGGCWPPTGIHPLDPME) the chain is Mitochondrial intermembrane. Residues 129–152 (VPLLNTSVLLASGVTITWAHHSLM) traverse the membrane as a helical segment. At 153–155 (EGN) the chain is on the mitochondrial matrix side. A helical transmembrane segment spans residues 156-183 (RKQMLQALFITISLGIYFTLLQASEYHE). At 184–190 (ASFSISD) the chain is on the mitochondrial intermembrane side. Residues 191-223 (GIYGSTFFMATGFHGLHVIIGSTFLAVCFLRQL) form a helical membrane-spanning segment. The Mitochondrial matrix portion of the chain corresponds to 224 to 232 (KFHFTSNHH). A helical membrane pass occupies residues 233–256 (FGFEAAAWYWHFVDVVWLFLYVSI). Residues 257–261 (YWWGS) are Mitochondrial intermembrane-facing.

This sequence belongs to the cytochrome c oxidase subunit 3 family. As to quaternary structure, component of the cytochrome c oxidase (complex IV, CIV), a multisubunit enzyme composed of 14 subunits. The complex is composed of a catalytic core of 3 subunits MT-CO1, MT-CO2 and MT-CO3, encoded in the mitochondrial DNA, and 11 supernumerary subunits COX4I, COX5A, COX5B, COX6A, COX6B, COX6C, COX7A, COX7B, COX7C, COX8 and NDUFA4, which are encoded in the nuclear genome. The complex exists as a monomer or a dimer and forms supercomplexes (SCs) in the inner mitochondrial membrane with NADH-ubiquinone oxidoreductase (complex I, CI) and ubiquinol-cytochrome c oxidoreductase (cytochrome b-c1 complex, complex III, CIII), resulting in different assemblies (supercomplex SCI(1)III(2)IV(1) and megacomplex MCI(2)III(2)IV(2)).

The protein localises to the mitochondrion inner membrane. It carries out the reaction 4 Fe(II)-[cytochrome c] + O2 + 8 H(+)(in) = 4 Fe(III)-[cytochrome c] + 2 H2O + 4 H(+)(out). Its function is as follows. Component of the cytochrome c oxidase, the last enzyme in the mitochondrial electron transport chain which drives oxidative phosphorylation. The respiratory chain contains 3 multisubunit complexes succinate dehydrogenase (complex II, CII), ubiquinol-cytochrome c oxidoreductase (cytochrome b-c1 complex, complex III, CIII) and cytochrome c oxidase (complex IV, CIV), that cooperate to transfer electrons derived from NADH and succinate to molecular oxygen, creating an electrochemical gradient over the inner membrane that drives transmembrane transport and the ATP synthase. Cytochrome c oxidase is the component of the respiratory chain that catalyzes the reduction of oxygen to water. Electrons originating from reduced cytochrome c in the intermembrane space (IMS) are transferred via the dinuclear copper A center (CU(A)) of subunit 2 and heme A of subunit 1 to the active site in subunit 1, a binuclear center (BNC) formed by heme A3 and copper B (CU(B)). The BNC reduces molecular oxygen to 2 water molecules using 4 electrons from cytochrome c in the IMS and 4 protons from the mitochondrial matrix. This chain is Cytochrome c oxidase subunit 3 (MT-CO3), found in Dugong dugon (Dugong).